The primary structure comprises 200 residues: Intraflagellar transport protein 43 homolog (200 aa).

Disordered regions lie at residues 56 to 76 (KTGK…IAAP) and 175 to 200 (ERID…SSKY). Over residues 175–192 (ERIDAKDQPSDSRSRNAR) the composition is skewed to basic and acidic residues.

Belongs to the IFT43 family. As to quaternary structure, component of the IFT complex A (IFT-A) composed of at least che-11, daf-10, dyf-2, ift-139, ift-43 and ifta-1. In terms of tissue distribution, expressed in ciliated sensory neurons.

It localises to the cell projection. Its subcellular location is the cilium. Its function is as follows. As a component of IFT complex A (IFT-A), a complex required for retrograde ciliary transport and entry into cilia of G protein-coupled receptors (GPCRs), it is involved in ciliogenesis. In particular, may act redundantly with the intraflagellar transport protein ift-139 to regulate the transport of specific ciliary cargo proteins such as che-3 which are related to motility. The sequence is that of Intraflagellar transport protein 43 homolog from Caenorhabditis elegans.